A 192-amino-acid polypeptide reads, in one-letter code: uncharacterized protein (192 aa).

In terms of domain architecture, Nudix hydrolase spans 29 to 160 (RRQAAVLIPV…PLDIYRRGDS (132 aa)). The Nudix box signature appears at 67–89 (GAVDSSDASLIAAALREAQEEVA). 2 residues coordinate Mg(2+): Glu83 and Glu87.

It belongs to the Nudix hydrolase family. PCD1 subfamily. The cofactor is Mn(2+). It depends on Mg(2+) as a cofactor.

Functionally, probably mediates the hydrolysis of some nucleoside diphosphate derivatives. This is an uncharacterized protein from Citrobacter koseri (strain ATCC BAA-895 / CDC 4225-83 / SGSC4696).